We begin with the raw amino-acid sequence, 286 residues long: CCR4-NOT transcription complex subunit 7 (286 aa).

The a divalent metal cation site is built by Asp40, Glu42, Asp161, Asp230, and Glu278.

Belongs to the CAF1 family. In terms of assembly, component of the CCR4-NOT complex. It depends on Mn(2+) as a cofactor. The cofactor is Mg(2+). Requires Co(2+) as cofactor.

The protein resides in the nucleus. The protein localises to the cytoplasm. It catalyses the reaction Exonucleolytic cleavage of poly(A) to 5'-AMP.. Has 3'-5' poly(A) exoribonuclease activity for synthetic poly(A) RNA substrate. Catalytic component of the CCR4-NOT complex which is one of the major cellular mRNA deadenylases and is linked to various cellular processes including bulk mRNA degradation, miRNA-mediated repression, translational repression during translational initiation and general transcription regulation. During miRNA-mediated repression the complex also seems to act as translational repressor during translational initiation. Additional complex functions may be a consequence of its influence on mRNA expression. This is CCR4-NOT transcription complex subunit 7 (cnot7) from Danio rerio (Zebrafish).